The primary structure comprises 121 residues: Phosphoribosyl-ATP pyrophosphatase (121 aa).

Belongs to the PRA-PH family.

It is found in the cytoplasm. It carries out the reaction 1-(5-phospho-beta-D-ribosyl)-ATP + H2O = 1-(5-phospho-beta-D-ribosyl)-5'-AMP + diphosphate + H(+). It participates in amino-acid biosynthesis; L-histidine biosynthesis; L-histidine from 5-phospho-alpha-D-ribose 1-diphosphate: step 2/9. The sequence is that of Phosphoribosyl-ATP pyrophosphatase from Burkholderia ambifaria (strain MC40-6).